Here is a 289-residue protein sequence, read N- to C-terminus: 4-hydroxy-tetrahydrodipicolinate synthase (289 aa).

A pyruvate-binding site is contributed by Thr45. Tyr133 serves as the catalytic Proton donor/acceptor. Lys161 functions as the Schiff-base intermediate with substrate in the catalytic mechanism. Ile200 contacts pyruvate.

It belongs to the DapA family. As to quaternary structure, homotetramer; dimer of dimers.

It is found in the cytoplasm. It catalyses the reaction L-aspartate 4-semialdehyde + pyruvate = (2S,4S)-4-hydroxy-2,3,4,5-tetrahydrodipicolinate + H2O + H(+). Its pathway is amino-acid biosynthesis; L-lysine biosynthesis via DAP pathway; (S)-tetrahydrodipicolinate from L-aspartate: step 3/4. Catalyzes the condensation of (S)-aspartate-beta-semialdehyde [(S)-ASA] and pyruvate to 4-hydroxy-tetrahydrodipicolinate (HTPA). This Coxiella burnetii (strain Dugway 5J108-111) protein is 4-hydroxy-tetrahydrodipicolinate synthase.